The sequence spans 360 residues: Peptide chain release factor 1 (360 aa).

Gln-235 is subject to N5-methylglutamine. The interval 284-313 (AKRQQAEASTRRNLLGSGDRSDRNRTYNFP) is disordered.

The protein belongs to the prokaryotic/mitochondrial release factor family. Methylated by PrmC. Methylation increases the termination efficiency of RF1.

The protein resides in the cytoplasm. Its function is as follows. Peptide chain release factor 1 directs the termination of translation in response to the peptide chain termination codons UAG and UAA. The chain is Peptide chain release factor 1 from Escherichia coli O127:H6 (strain E2348/69 / EPEC).